The sequence spans 367 residues: Anthranilate phosphoribosyltransferase (367 aa).

Low complexity predominate over residues 1–21 (MALSSESSAASAARRPSGGPA). The interval 1–24 (MALSSESSAASAARRPSGGPATSW) is disordered. 5-phospho-alpha-D-ribose 1-diphosphate contacts are provided by residues Gly104, 107 to 108 (GD), Thr112, 114 to 117 (NLST), 132 to 140 (KHGNRAASS), and Gly144. Gly104 is a binding site for anthranilate. Ser116 contributes to the Mg(2+) binding site. Asn135 lines the anthranilate pocket. Arg190 is a binding site for anthranilate. 2 residues coordinate Mg(2+): Asp248 and Glu249.

It belongs to the anthranilate phosphoribosyltransferase family. As to quaternary structure, homodimer. Requires Mg(2+) as cofactor.

It carries out the reaction N-(5-phospho-beta-D-ribosyl)anthranilate + diphosphate = 5-phospho-alpha-D-ribose 1-diphosphate + anthranilate. It participates in amino-acid biosynthesis; L-tryptophan biosynthesis; L-tryptophan from chorismate: step 2/5. Functionally, catalyzes the transfer of the phosphoribosyl group of 5-phosphorylribose-1-pyrophosphate (PRPP) to anthranilate to yield N-(5'-phosphoribosyl)-anthranilate (PRA). The protein is Anthranilate phosphoribosyltransferase of Mycolicibacterium paratuberculosis (strain ATCC BAA-968 / K-10) (Mycobacterium paratuberculosis).